The following is a 583-amino-acid chain: L-galactono-1,4-lactone dehydrogenase 1, mitochondrial (583 aa).

The transit peptide at 1 to 36 (MRRLLLAGILRRASSSPSSHHHLHLVRALSASSPLP) directs the protein to the mitochondrion. A propeptide spans 37-78 (ASDADLRKYAGYALLLLGCGAATYYSFPLPPDALHKKAVPFK) (removed in mature form). A helical membrane pass occupies residues 45-61 (YAGYALLLLGCGAATYY). The FAD-binding PCMH-type domain maps to 95 to 266 (THEVHTRVLL…AEVTLQCVER (172 aa)).

It depends on FAD as a cofactor.

Its subcellular location is the mitochondrion membrane. The enzyme catalyses L-galactono-1,4-lactone + 4 Fe(III)-[cytochrome c] = L-dehydroascorbate + 4 Fe(II)-[cytochrome c] + 5 H(+). It participates in cofactor biosynthesis; L-ascorbate biosynthesis. In terms of biological role, involved in the biosynthesis of ascorbic acid. The chain is L-galactono-1,4-lactone dehydrogenase 1, mitochondrial (GLDH1) from Oryza sativa subsp. japonica (Rice).